A 224-amino-acid polypeptide reads, in one-letter code: Urease accessory protein UreF (224 aa).

This sequence belongs to the UreF family. In terms of assembly, ureD, UreF and UreG form a complex that acts as a GTP-hydrolysis-dependent molecular chaperone, activating the urease apoprotein by helping to assemble the nickel containing metallocenter of UreC. The UreE protein probably delivers the nickel.

It is found in the cytoplasm. In terms of biological role, required for maturation of urease via the functional incorporation of the urease nickel metallocenter. This Pseudomonas fluorescens (strain SBW25) protein is Urease accessory protein UreF.